The sequence spans 431 residues: REST corepressor 1 (431 aa).

Residues 1–10 (MIEKGAEISG) are compositionally biased toward basic and acidic residues. A disordered region spans residues 1-53 (MIEKGAEISGKRRGRNNAANSKSLGTNVNGSNSWEEGSSSSSSDDEPGGGGMR). A compositionally biased stretch (polar residues) spans 17–28 (NAANSKSLGTNV). The span at 29–42 (NGSNSWEEGSSSSS) shows a compositional bias: low complexity. An ELM2 domain is found at 50 to 135 (GGMRVGLQYQ…KSLADLLNFT (86 aa)). In terms of domain architecture, SANT 1 spans 136 to 187 (PFPDEWTVEDRVLFEQAFSFHGKTFHRIQQMLPDKSIASLVKFYYSWKKTRS). The tract at residues 190–262 (SVMDRHARKQ…NRAKRKPPNG (73 aa)) is disordered. Over residues 224-242 (EQPKEAKKEVPKNDTVPHI) the composition is skewed to basic and acidic residues. Residues 267–314 (QEDVEAVSANANAATTVLRQLDMELVSIKRQIQNIKQTNSAFKEKLQG) adopt a coiled-coil conformation. An SANT 2 domain is found at 327-378 (KFNARWTTEEQLLAVQAIRMYGRDFQAISDVIGNKSVVQVKNFFVNYRRRFN).

This sequence belongs to the CoREST family. In terms of assembly, component of a BHC histone deacetylase complex that contains KDM1A. As to expression, expressed in territories in which neurogenesis takes place.

Its subcellular location is the nucleus. Essential component of the BHC complex, a corepressor complex that represses transcription of neuron-specific genes in non-neuronal cells. The BHC complex is recruited at RE1/NRSE sites by REST and acts by deacetylating and demethylating specific sites on histones, thereby acting as a chromatin modifier. In the BHC complex, it serves as a molecular beacon for the recruitment of molecular machinery that imposes silencing across a chromosomal interval. Plays a central role in demethylation of Lys-4 of histone H3 by promoting demethylase activity of KDM1A on core histones and nucleosomal substrates. The protein is REST corepressor 1 (rcor1) of Xenopus laevis (African clawed frog).